The sequence spans 120 residues: Large ribosomal subunit protein uL18 (120 aa).

The segment at 1 to 26 is disordered; it reads MKLTRRESKQRRHRRVRGKVQGSPER. Residues 8-18 are compositionally biased toward basic residues; it reads SKQRRHRRVRG.

This sequence belongs to the universal ribosomal protein uL18 family. In terms of assembly, part of the 50S ribosomal subunit; part of the 5S rRNA/L5/L18/L25 subcomplex. Contacts the 5S and 23S rRNAs.

Its function is as follows. This is one of the proteins that bind and probably mediate the attachment of the 5S RNA into the large ribosomal subunit, where it forms part of the central protuberance. This Trichormus variabilis (strain ATCC 29413 / PCC 7937) (Anabaena variabilis) protein is Large ribosomal subunit protein uL18.